Here is a 397-residue protein sequence, read N- to C-terminus: MQVYLVGGAVRDALLNRKVIERDYVVVGATPQEMLSQGFTQVGKDFPVFLHPKTQEEYALARTERKSGKGYTGFVCDASSSVTLEEDLLRRDLTVNAIAQDNLGNLIDPYGGKKDLENHLLRHVSEAFSEDPLRVFRVARFATRYAYLGFTIANETMALMQSMAESGELSTLSAERVWQETKRSLLEKTPHVFFTVLNQAHGLNDWFAELESNLDAAIATLKTAVALENAAKENFDKSGQLENKPLETKIPESSSSGTTTLIIRFTALLAHLNEEEAKRLCNRLKVQNQLSEIVILACKFKDFLLNTQNSPADLLALFNGCDAWRRSERFTLLLKAFAPYAHYKDLDWQRQQEHIENALSAANQVNVQDIIATGVKGPAIKEALNQAKLDAIASIGE.

2 residues coordinate ATP: Gly-8 and Arg-11. CTP contacts are provided by Gly-8 and Arg-11. Positions 21 and 23 each coordinate Mg(2+). 3 residues coordinate ATP: Arg-91, Arg-137, and Arg-140. Residues Arg-91, Arg-137, and Arg-140 each contribute to the CTP site. The HD domain occupies 213 to 324 (NLDAAIATLK…LALFNGCDAW (112 aa)).

The protein belongs to the tRNA nucleotidyltransferase/poly(A) polymerase family. Bacterial CCA-adding enzyme type 2 subfamily. Requires Mg(2+) as cofactor.

The catalysed reaction is a tRNA precursor + 2 CTP + ATP = a tRNA with a 3' CCA end + 3 diphosphate. It carries out the reaction a tRNA with a 3' CCA end + 2 CTP + ATP = a tRNA with a 3' CCACCA end + 3 diphosphate. In terms of biological role, catalyzes the addition and repair of the essential 3'-terminal CCA sequence in tRNAs without using a nucleic acid template. Adds these three nucleotides in the order of C, C, and A to the tRNA nucleotide-73, using CTP and ATP as substrates and producing inorganic pyrophosphate. tRNA 3'-terminal CCA addition is required both for tRNA processing and repair. Also involved in tRNA surveillance by mediating tandem CCA addition to generate a CCACCA at the 3' terminus of unstable tRNAs. While stable tRNAs receive only 3'-terminal CCA, unstable tRNAs are marked with CCACCA and rapidly degraded. In Alteromonas mediterranea (strain DSM 17117 / CIP 110805 / LMG 28347 / Deep ecotype), this protein is CCA-adding enzyme.